The following is a 904-amino-acid chain: Leucine--tRNA ligase (904 aa).

A 'HIGH' region motif is present at residues 49–59 (PYPSGDLHIGH). The 'KMSKS' region motif lies at 663 to 667 (TMSKS). Lysine 666 is a binding site for ATP.

This sequence belongs to the class-I aminoacyl-tRNA synthetase family.

It localises to the cytoplasm. It carries out the reaction tRNA(Leu) + L-leucine + ATP = L-leucyl-tRNA(Leu) + AMP + diphosphate. This chain is Leucine--tRNA ligase, found in Roseiflexus castenholzii (strain DSM 13941 / HLO8).